A 29-amino-acid polypeptide reads, in one-letter code: Cytochrome b6-f complex subunit 8 (29 aa).

The chain crosses the membrane as a helical span at residues 3 to 23; it reads IVSLGWAFLMVVFSFSLSLVV.

This sequence belongs to the PetN family. The 4 large subunits of the cytochrome b6-f complex are cytochrome b6, subunit IV (17 kDa polypeptide, PetD), cytochrome f and the Rieske protein, while the 4 small subunits are PetG, PetL, PetM and PetN. The complex functions as a dimer.

The protein resides in the plastid. It localises to the chloroplast thylakoid membrane. Functionally, component of the cytochrome b6-f complex, which mediates electron transfer between photosystem II (PSII) and photosystem I (PSI), cyclic electron flow around PSI, and state transitions. This is Cytochrome b6-f complex subunit 8 from Chlorokybus atmophyticus (Soil alga).